The following is a 214-amino-acid chain: 3-isopropylmalate dehydratase small subunit (214 aa).

This sequence belongs to the LeuD family. LeuD type 1 subfamily. In terms of assembly, heterodimer of LeuC and LeuD.

The enzyme catalyses (2R,3S)-3-isopropylmalate = (2S)-2-isopropylmalate. It participates in amino-acid biosynthesis; L-leucine biosynthesis; L-leucine from 3-methyl-2-oxobutanoate: step 2/4. In terms of biological role, catalyzes the isomerization between 2-isopropylmalate and 3-isopropylmalate, via the formation of 2-isopropylmaleate. This Methylobacillus flagellatus (strain ATCC 51484 / DSM 6875 / VKM B-1610 / KT) protein is 3-isopropylmalate dehydratase small subunit.